We begin with the raw amino-acid sequence, 433 residues long: Chitinase-like protein EN03 (433 aa).

Positions 1-16 are cleaved as a signal peptide; it reads MKLFIALVGLLALAKA. One can recognise a GH18 domain in the interval 23–433; it reads SKVLCYYDSR…PILRAAKYRL (411 aa). Cysteines 27 and 54 form a disulfide. N-linked (GlcNAc...) asparagine glycosylation is present at Asn-220. An intrachain disulfide couples Cys-337 to Cys-418.

Belongs to the glycosyl hydrolase 18 family. IDGF subfamily.

It localises to the secreted. This is Chitinase-like protein EN03 from Bombyx mori (Silk moth).